Reading from the N-terminus, the 305-residue chain is tRNA dimethylallyltransferase (305 aa).

Position 9-16 (9-16 (GPTASGKT)) interacts with ATP. Substrate is bound at residue 11–16 (TASGKT). Interaction with substrate tRNA regions lie at residues 34-37 (DSAL), 158-162 (QRLSR), and 239-244 (RCVGYR).

Belongs to the IPP transferase family. Monomer. Mg(2+) serves as cofactor.

The catalysed reaction is adenosine(37) in tRNA + dimethylallyl diphosphate = N(6)-dimethylallyladenosine(37) in tRNA + diphosphate. Catalyzes the transfer of a dimethylallyl group onto the adenine at position 37 in tRNAs that read codons beginning with uridine, leading to the formation of N6-(dimethylallyl)adenosine (i(6)A). This Aeromonas hydrophila subsp. hydrophila (strain ATCC 7966 / DSM 30187 / BCRC 13018 / CCUG 14551 / JCM 1027 / KCTC 2358 / NCIMB 9240 / NCTC 8049) protein is tRNA dimethylallyltransferase.